The following is a 344-amino-acid chain: MDEVIVEYIRRTVLKIPRDEIMAVLQKWGFLSEAQLQTINFRQTKEGISHSVAQLCEESSADLKQAALLDIIYNHIYPNKRVWSVYHMNKTGEETDFFDFRDFKKKFRRQIQSALINVTINFREYEDNAIWIRIAWGTPYTKPNQYKTSYVVYHSQTPYVFISASVLRSNLPLLCQAMVVASNYHDIHEMELRSHCLNSLKDIVFKRYSQNFQTNYPLQERNVLTENVDLRINDENRSEKERIYRLNQESFGNGPQPKLDFAQYKLETMFKSDPKWDVLEKKEPFRCLVKFSSPHLLESLKSLAPAGLADAPLSPLLTCIPQKARNYFKIREKKSLHPGSFVSP.

It belongs to the CENP-N/CHL4 family.

Its subcellular location is the nucleus. It is found in the chromosome. The protein localises to the centromere. Functionally, probable component of a centromeric complex involved in assembly of kinetochore proteins, mitotic progression and chromosome segregation. The polypeptide is Centromere protein N (CENPN) (Gallus gallus (Chicken)).